The sequence spans 1101 residues: Coiled-coil domain-containing protein 150 (1101 aa).

4 coiled-coil regions span residues 106 to 299 (RLES…DLTS), 398 to 680 (AAHA…KEDN), 712 to 940 (DSEI…NYEQ), and 970 to 1033 (VRNK…EAHR). Basic and acidic residues predominate over residues 1055–1071 (SGEDRWQEKDQDVKHDV). Residues 1055–1101 (SGEDRWQEKDQDVKHDVMSNQSVLHRWERKQNLRPMPKKYHSEVQRK) form a disordered region.

This chain is Coiled-coil domain-containing protein 150 (CCDC150), found in Homo sapiens (Human).